The following is a 341-amino-acid chain: tRNA N6-adenosine threonylcarbamoyltransferase (341 aa).

Fe cation-binding residues include His-111 and His-115. Substrate-binding positions include 134 to 138, Asp-167, Gly-180, and Asn-272; that span reads LVSGG. Fe cation is bound at residue Asp-300.

This sequence belongs to the KAE1 / TsaD family. Requires Fe(2+) as cofactor.

The protein resides in the cytoplasm. The catalysed reaction is L-threonylcarbamoyladenylate + adenosine(37) in tRNA = N(6)-L-threonylcarbamoyladenosine(37) in tRNA + AMP + H(+). Functionally, required for the formation of a threonylcarbamoyl group on adenosine at position 37 (t(6)A37) in tRNAs that read codons beginning with adenine. Is involved in the transfer of the threonylcarbamoyl moiety of threonylcarbamoyl-AMP (TC-AMP) to the N6 group of A37, together with TsaE and TsaB. TsaD likely plays a direct catalytic role in this reaction. The chain is tRNA N6-adenosine threonylcarbamoyltransferase from Psychromonas ingrahamii (strain DSM 17664 / CCUG 51855 / 37).